Consider the following 172-residue polypeptide: MVDKRESYTKEDLEASGRGELFGAGGPPLPAGNMLMMDRIVKMIEDGGSHNKGYVEAELDINPDLWFFGCHFIGDPVMPGCLGLDAMWQLVGFYLGWLGGEGKGRALGVGEVKFTGQVLPDAKKVTYRINFKRVIMRKLIMGVADGEVLVDGKVIYTATDLKVGLFKDTNAF.

His71 is an active-site residue.

Belongs to the thioester dehydratase family. FabA subfamily. Homodimer.

Its subcellular location is the cytoplasm. The enzyme catalyses a (3R)-hydroxyacyl-[ACP] = a (2E)-enoyl-[ACP] + H2O. The catalysed reaction is (3R)-hydroxydecanoyl-[ACP] = (2E)-decenoyl-[ACP] + H2O. It catalyses the reaction (2E)-decenoyl-[ACP] = (3Z)-decenoyl-[ACP]. It participates in lipid metabolism; fatty acid biosynthesis. In terms of biological role, necessary for the introduction of cis unsaturation into fatty acids. Catalyzes the dehydration of (3R)-3-hydroxydecanoyl-ACP to E-(2)-decenoyl-ACP and then its isomerization to Z-(3)-decenoyl-ACP. Can catalyze the dehydratase reaction for beta-hydroxyacyl-ACPs with saturated chain lengths up to 16:0, being most active on intermediate chain length. The chain is 3-hydroxydecanoyl-[acyl-carrier-protein] dehydratase from Yersinia pseudotuberculosis serotype O:1b (strain IP 31758).